The following is a 456-amino-acid chain: Glycine receptor subunit alpha-4 (456 aa).

The first 27 residues, 1-27 (MTTLVPASLFLLLWTLPGKVLLSVALA), serve as a signal peptide directing secretion. Topologically, residues 28 to 256 (KEDVKSGLKG…KFHLERQMGY (229 aa)) are extracellular. Asn-71 is a glycosylation site (N-linked (GlcNAc...) asparagine). 2 disulfides stabilise this stretch: Cys-171–Cys-185 and Cys-232–Cys-243. 236–241 (YNTGKF) provides a ligand contact to strychnine. A helical transmembrane segment spans residues 257–278 (YLIQMYIPSLLIVILSWVSFWI). At 279–283 (NMDAA) the chain is on the cytoplasmic side. Residues 284–304 (PARVGLGITTVLTMTTQSSGS) traverse the membrane as a helical segment. At 305–315 (RASLPKVSYVK) the chain is on the extracellular side. Residues 316–336 (AIDIWMAVCLLFVFAALLEYA) traverse the membrane as a helical segment. The Cytoplasmic segment spans residues 337 to 423 (AVNFVSRQHK…YVDRAKRIDT (87 aa)). The helical transmembrane segment at 424 to 444 (ISRAVFPFTFLVFNIFYWVVY) threads the bilayer. The Extracellular segment spans residues 445–456 (KVLRSEDIHQAL).

The protein belongs to the ligand-gated ion channel (TC 1.A.9) family. Glycine receptor (TC 1.A.9.3) subfamily. GLRA4 sub-subfamily. As to quaternary structure, homopentamer (in vitro). Heteropentamer composed of GLRA4 and GLRB. Detected in the retina inner plexiform layer, especially at the border between layer three and four (at protein level).

It localises to the postsynaptic cell membrane. The protein resides in the synapse. Its subcellular location is the perikaryon. It is found in the cell projection. The protein localises to the dendrite. It localises to the cell membrane. The catalysed reaction is chloride(in) = chloride(out). With respect to regulation, inhibited by strychnine. Glycine receptors are ligand-gated chloride channels. Channel opening is triggered by extracellular glycine. Channel opening is also triggered by taurine and beta-alanine. Plays a role in the down-regulation of neuronal excitability. Contributes to the generation of inhibitory postsynaptic currents. The chain is Glycine receptor subunit alpha-4 (Glra4) from Mus musculus (Mouse).